The chain runs to 243 residues: Carboxy-S-adenosyl-L-methionine synthase (243 aa).

Residues Tyr-40, 65-67 (GCS), 90-91 (DN), 118-119 (DI), Asn-133, and Arg-200 contribute to the S-adenosyl-L-methionine site.

The protein belongs to the class I-like SAM-binding methyltransferase superfamily. Cx-SAM synthase family. As to quaternary structure, homodimer.

The enzyme catalyses prephenate + S-adenosyl-L-methionine = carboxy-S-adenosyl-L-methionine + 3-phenylpyruvate + H2O. Its function is as follows. Catalyzes the conversion of S-adenosyl-L-methionine (SAM) to carboxy-S-adenosyl-L-methionine (Cx-SAM). The sequence is that of Carboxy-S-adenosyl-L-methionine synthase from Shewanella sp. (strain MR-7).